The primary structure comprises 111 residues: uncharacterized protein (111 aa).

The protein resides in the mitochondrion. This is an uncharacterized protein from Arabidopsis thaliana (Mouse-ear cress).